The sequence spans 301 residues: E3 ubiquitin-protein ligase RNF144B (301 aa).

The interval 26–242 (PLVTCKLCLC…YDKGPCRNKL (217 aa)) is TRIAD supradomain. The Zn(2+) site is built by Cys-30, Cys-33, Cys-53, Cys-56, Cys-121, Cys-126, Cys-145, Cys-148, Cys-153, Cys-156, His-161, Cys-166, Cys-191, and Cys-194. The RING-type 1 zinc finger occupies 30 to 80 (CKLCLCEQSLDKMTMLQECQCIFCTPCLKQYMVLSIREGCGSPITCPDMVC). An IBR-type zinc finger spans residues 101–166 (QLYQRLKFER…KDAWHEESSC (66 aa)). The RING-type 2; atypical zinc finger occupies 191-220 (CPVCRIYIERNEGCAQMMCKNCKHTFCWYC). The active site involves Cys-204. The Zn(2+) site is built by Cys-209, Cys-212, Cys-217, Cys-220, His-232, and Cys-238. The helical transmembrane segment at 256-276 (VVGILVGLGVIALVTSPLLLL) threads the bilayer.

This sequence belongs to the RBR family. RNF144 subfamily. As to quaternary structure, interacts with UBE2L3, UBE2L6 and LCMT2, as well as with BAX. Interacts with TBK1; this interaction inhibits TBK1 phosphorylation and 'Lys-63'-linked polyubiquitination. Post-translationally, auto-ubiquitinated.

The protein localises to the mitochondrion membrane. The protein resides in the cytoplasm. The enzyme catalyses [E2 ubiquitin-conjugating enzyme]-S-ubiquitinyl-L-cysteine + [acceptor protein]-L-lysine = [E2 ubiquitin-conjugating enzyme]-L-cysteine + [acceptor protein]-N(6)-ubiquitinyl-L-lysine.. The protein operates within protein modification; protein ubiquitination. E3 ubiquitin-protein ligase which accepts ubiquitin from E2 ubiquitin-conjugating enzymes UBE2L3 and UBE2L6 in the form of a thioester and then directly transfers the ubiquitin to targeted substrates such as LCMT2, thereby promoting their degradation. Induces apoptosis via a p53/TP53-dependent but caspase-independent mechanism. Plays a crucial role in maintaining the genomic stability by controlling the degradation of multiple proteins involved in mitotic progression and DNA damage. Regulates epithelial homeostasis by mediating degradation of CDKN1A and isoform 2 of TP63. Plays a regulatory role in innate immunity by negatively regulating IRF3 activation and IFN-beta production. Mechanistically, inhibits TBK1 phosphorylation and 'Lys-63'-linked polyubiquitination independently of its E3 ligase activity. Alternatively, promotes 'Lys-27' and 'Lys-33'-linked ubiquitination of IFIH1/MDA5, promoting selective autophagic degradation of IFIH1/MDA5 to inhibit antiviral response. This chain is E3 ubiquitin-protein ligase RNF144B (Rnf144b), found in Mus musculus (Mouse).